A 795-amino-acid polypeptide reads, in one-letter code: Phenylalanine--tRNA ligase beta subunit (795 aa).

Positions 39–148 (AGRFTGVVVG…AEAPIGQDIR (110 aa)) constitute a tRNA-binding domain. Positions 401–476 (PQPATITLRR…RVYGYDAIPN (76 aa)) constitute a B5 domain. Aspartate 454, aspartate 460, glutamate 463, and glutamate 464 together coordinate Mg(2+). The 94-residue stretch at 701 to 794 (SRFPANRRDI…LKQRFQASLR (94 aa)) folds into the FDX-ACB domain.

Belongs to the phenylalanyl-tRNA synthetase beta subunit family. Type 1 subfamily. Tetramer of two alpha and two beta subunits. Mg(2+) is required as a cofactor.

The protein localises to the cytoplasm. It carries out the reaction tRNA(Phe) + L-phenylalanine + ATP = L-phenylalanyl-tRNA(Phe) + AMP + diphosphate + H(+). The chain is Phenylalanine--tRNA ligase beta subunit from Sodalis glossinidius (strain morsitans).